The primary structure comprises 30 residues: Cyclotide vdif-A (30 aa).

The segment at residues 1-30 (GIPCGESCVFIPCISSVVGCSCKSKVCYRN) is a cross-link (cyclopeptide (Gly-Asn)). 3 disulfides stabilise this stretch: Cys-4–Cys-20, Cys-8–Cys-22, and Cys-13–Cys-27.

This sequence belongs to the cyclotide family. Bracelet subfamily. Post-translationally, this is a cyclic peptide.

In terms of biological role, probably participates in a plant defense mechanism. The sequence is that of Cyclotide vdif-A from Viola diffusa.